The following is a 141-amino-acid chain: Large-conductance mechanosensitive channel (141 aa).

2 helical membrane-spanning segments follow: residues 16-36 and 83-103; these read VVDLAVGVIIGGAFGKIVSSM and GNFIQTVIDFTILAFVIFLMV.

This sequence belongs to the MscL family. Homopentamer.

It localises to the cell inner membrane. Functionally, channel that opens in response to stretch forces in the membrane lipid bilayer. May participate in the regulation of osmotic pressure changes within the cell. This chain is Large-conductance mechanosensitive channel, found in Cytophaga hutchinsonii (strain ATCC 33406 / DSM 1761 / CIP 103989 / NBRC 15051 / NCIMB 9469 / D465).